Reading from the N-terminus, the 410-residue chain is UBX domain-containing protein 3 (410 aa).

Disordered regions lie at residues 46-139 and 154-212; these read EEDH…PDPK and TISP…EKPL. The span at 65–85 shows a compositional bias: low complexity; the sequence is GSSSGISGGDQQPPRPLQRQQ. Residues 86–97 show a composition bias toward polar residues; that stretch reads NTQGQGMKSGTA. Phosphoserine occurs at positions 156, 167, and 186. Positions 163 to 174 are enriched in low complexity; sequence SGPSSLASSWAS. Residues 183–196 are compositionally biased toward polar residues; it reads NEASGSTTPVTQSG. Position 190 is a phosphothreonine (Thr190). The 66-residue stretch at 211-276 folds into the SEP domain; it reads PLRRTLYFWR…VQHRMDEDYV (66 aa). In terms of domain architecture, UBX spans 334–410; sequence ENKPTTRIQV…KNASLVQKSL (77 aa).

In terms of assembly, interacts with cdc48.

In terms of biological role, involved in CDC48-dependent protein degradation through the ubiquitin/proteasome pathway. Involved in delivery of substrates to the 26S proteasome. Also required for membrane fusion and sporulation. In Schizosaccharomyces pombe (strain 972 / ATCC 24843) (Fission yeast), this protein is UBX domain-containing protein 3 (ubx3).